We begin with the raw amino-acid sequence, 466 residues long: Cysteine--tRNA ligase (466 aa).

Position 28 (Cys28) interacts with Zn(2+). The short motif at Pro30 to Asn40 is the 'HIGH' region element. The Zn(2+) site is built by Cys208, His233, and Glu237. The short motif at Lys265–Ser269 is the 'KMSKS' region element. Lys268 contacts ATP.

It belongs to the class-I aminoacyl-tRNA synthetase family. Monomer. Requires Zn(2+) as cofactor.

The protein localises to the cytoplasm. The catalysed reaction is tRNA(Cys) + L-cysteine + ATP = L-cysteinyl-tRNA(Cys) + AMP + diphosphate. The protein is Cysteine--tRNA ligase of Clostridium perfringens (strain ATCC 13124 / DSM 756 / JCM 1290 / NCIMB 6125 / NCTC 8237 / Type A).